The sequence spans 511 residues: Aminotransferase FGSG_17085 (511 aa).

165 to 166 (GA) contacts pyridoxal 5'-phosphate. Tyr200 contacts substrate. Asp310 is a pyridoxal 5'-phosphate binding site. Residue Lys339 is modified to N6-(pyridoxal phosphate)lysine. Gly371 is a substrate binding site. 372–373 (HT) is a binding site for pyridoxal 5'-phosphate.

It belongs to the class-III pyridoxal-phosphate-dependent aminotransferase family. The cofactor is pyridoxal 5'-phosphate.

The protein operates within secondary metabolite biosynthesis. In terms of biological role, aminotransferase; part of the gene cluster that mediates the biosynthesis of the lipopeptide fusaristatin A. Fusaristatin A consists of a polyketide chain linked to three amino acid residues glutamine (Gln), dehydroalanine (dehydro-Ala), and beta-aminoisobutyric acid. The biosynthesis starts with formation of a linear polyketide chain by the highly reducing polyketide synthase PKS6. The gene cluster does not contain an acyl-CoA ligase or an acyl-transferase, and it is therefore predicted that the polyketide is transferred directly to the nonribosomal peptide synthetase NRPS7. Modules 1-3 from NRPS7 incorporate dehydro-Ala, Gln, and beta-aminoisobutyric acid in the compound, which is released by cyclization. The beta-aminoisobutyric acid units are most likely not freely available to the NRPS, but can be synthesized from thymine, which requires a dehydrogenase, a monooxygenase, and an aminotransferase. The fusaristatin A cluster contains a cytochrome P450 monooxygenase (FGSG_08207) and an aminotransferase (FGSG_17085), which theoretically can perform two of the enzymatic steps. The enzymes may however also be involved in biosynthesis of dehydroalanine or modification of the polyketide. The dehydro-Ala residue can be a result of cyclization, where serine is dehydrated. The last gene of the cluster encodes a protein with an A/B barrel domain found in variable enzymes, which hampers functional prediction. The sequence is that of Aminotransferase FGSG_17085 from Gibberella zeae (strain ATCC MYA-4620 / CBS 123657 / FGSC 9075 / NRRL 31084 / PH-1) (Wheat head blight fungus).